The sequence spans 29 residues: Cyclotide vibi-B (29 aa).

Residues 1 to 29 (GLPVCGETCFGGTCNTPGCTCSYPICTRN) constitute a cross-link (cyclopeptide (Gly-Asn)). 3 cysteine pairs are disulfide-bonded: Cys5–Cys19, Cys9–Cys21, and Cys14–Cys26.

In terms of processing, this is a cyclic peptide.

Its function is as follows. Probably participates in a plant defense mechanism. This chain is Cyclotide vibi-B, found in Viola biflora (Yellow wood violet).